Consider the following 276-residue polypeptide: ATP synthase subunit delta (276 aa).

The protein belongs to the ATPase delta chain family. In terms of assembly, F-type ATPases have 2 components, F(1) - the catalytic core - and F(0) - the membrane proton channel. F(1) has five subunits: alpha(3), beta(3), gamma(1), delta(1), epsilon(1). F(0) has three main subunits: a(1), b(2) and c(10-14). The alpha and beta chains form an alternating ring which encloses part of the gamma chain. F(1) is attached to F(0) by a central stalk formed by the gamma and epsilon chains, while a peripheral stalk is formed by the delta and b chains.

The protein localises to the cell membrane. In terms of biological role, f(1)F(0) ATP synthase produces ATP from ADP in the presence of a proton or sodium gradient. F-type ATPases consist of two structural domains, F(1) containing the extramembraneous catalytic core and F(0) containing the membrane proton channel, linked together by a central stalk and a peripheral stalk. During catalysis, ATP synthesis in the catalytic domain of F(1) is coupled via a rotary mechanism of the central stalk subunits to proton translocation. Functionally, this protein is part of the stalk that links CF(0) to CF(1). It either transmits conformational changes from CF(0) to CF(1) or is implicated in proton conduction. This Frankia casuarinae (strain DSM 45818 / CECT 9043 / HFP020203 / CcI3) protein is ATP synthase subunit delta.